We begin with the raw amino-acid sequence, 473 residues long: Presenilin-B (473 aa).

The segment at 1–141 is disordered; the sequence is MSSDNNNDPF…PLLNKKEKDD (141 aa). Residues 1 to 164 are Cytoplasmic-facing; sequence MSSDNNNDPF…DDEVSLQDFS (164 aa). Residues 22–46 show a composition bias toward polar residues; it reads RVSTTTSPNRQSINSSPKQSSPKST. A compositionally biased stretch (low complexity) spans 54–72; sequence NIILDLNDNNNDNNNTNNY. The span at 79 to 89 shows a compositional bias: basic and acidic residues; sequence VDNKNKFENKD. A helical membrane pass occupies residues 165–185; the sequence is SMIVSIIIPVSITMMAVVFFV. The Lumenal segment spans residues 186-224; sequence KYLNNQTLYASTLSYTIAGGSSGGGSGADSITGNSFVDS. Asn-190 carries an N-linked (GlcNAc...) asparagine glycan. A helical membrane pass occupies residues 225-245; that stretch reads LIVAGIVLGMIIVTTVAFVLL. Residues 246 to 252 lie on the Cytoplasmic side of the membrane; the sequence is YKYRCLK. A helical membrane pass occupies residues 253–273; the sequence is ILYGWLFLSVGMMLGSFGTTF. The Lumenal segment spans residues 274–286; that stretch reads FQAMLSAANLPLD. A helical transmembrane segment spans residues 287–307; it reads YITFAFLIFNFTVCGIIGVFW. Position 308 (Tyr-308) is a topological domain, cytoplasmic. A helical transmembrane segment spans residues 309 to 329; sequence AHQYVNQLYLVIISVLMAISL. Residues 330-334 lie on the Lumenal side of the membrane; the sequence is TRLPQ. Residues 335 to 355 form a helical membrane-spanning segment; that stretch reads WTIFTLLVIVAIYDLFAVLCP. Asp-348 is an active-site residue. Topologically, residues 356–389 are cytoplasmic; it reads RGPLKVLVELSQERNENIPALVYETGKGSDSNLK. The helical transmembrane segment at 390 to 410 threads the bilayer; that stretch reads LGLGDFIFYSLLISRAALVHM. Residue Asp-394 is part of the active site. The Lumenal segment spans residues 411-413; it reads SCV. Residues 414–434 traverse the membrane as a helical segment; the sequence is FSTFIAILTGLFLTLLCLAIF. Residues 435–442 are Cytoplasmic-facing; that stretch reads KKALPALP. The PAL motif lies at 439–441; sequence PAL. Positions 443 to 463 form an intramembrane region, helical; the sequence is ISIFLGILFYYLSNNFLTPFI. Topologically, residues 464-473 are cytoplasmic; it reads EALTLSQIFV.

It belongs to the peptidase A22A family. In terms of assembly, homodimer. Component of the gamma-secretase complex, a complex composed of a presenilin homodimer, nicastrin, aph1 and pen2.

The protein localises to the endoplasmic reticulum membrane. It localises to the golgi apparatus membrane. Functionally, probable catalytic subunit of the gamma-secretase complex, an endoprotease complex that catalyzes the intramembrane cleavage of integral membrane proteins such as Notch receptors. Requires the other members of the gamma-secretase complex to have a protease activity. The protein is Presenilin-B (psenB) of Dictyostelium discoideum (Social amoeba).